We begin with the raw amino-acid sequence, 263 residues long: Killer cell lectin-like receptor 4 (263 aa).

Over 1–44 the chain is Cytoplasmic; sequence MTEQEDTFSAVRFHKSSGLQNEMRLKETRKPEKARLRVCSVPWQ. The helical; Signal-anchor for type II membrane protein transmembrane segment at 45 to 65 threads the bilayer; that stretch reads LIVIALGILISLRLVTVAVLM. The Extracellular segment spans residues 66–263; the sequence is TNIFQYGQQK…CGKRLDKFPH (198 aa). N-linked (GlcNAc...) asparagine glycosylation is found at Asn87 and Asn104. One can recognise a C-type lectin domain in the interval 139–258; sequence GVKVYWFCYG…SFICICGKRL (120 aa). Cystine bridges form between Cys146/Cys151, Cys164/Cys252, Cys168/Cys254, and Cys233/Cys246. N-linked (GlcNAc...) asparagine glycosylation is found at Asn170 and Asn222.

In terms of assembly, homodimer; disulfide-linked. Interacts with the adapter protein TYROBP/DAP12; the interaction leads to natural killer cell activation.

Its subcellular location is the cell membrane. Functionally, receptor on natural killer (NK) cells for class I MHC. The sequence is that of Killer cell lectin-like receptor 4 (Klra4) from Mus musculus (Mouse).